A 469-amino-acid chain; its full sequence is Neuraminidase (469 aa).

Over 1-9 (MNPNQKIIT) the chain is Intravirion. The helical transmembrane segment at 10–30 (IGSVSLTIATICFLMQIAILV) threads the bilayer. An involved in apical transport and lipid raft association region spans residues 11 to 33 (GSVSLTIATICFLMQIAILVTTV). At 31–469 (TTVTLHFKQY…DGADINLMPI (439 aa)) the chain is on the virion surface side. Residues 36-88 (HFKQYECSSPPNNQVMPCEPIIIERNITEIVYLTNTTIDKEICPKLVEYRNWS) are hypervariable stalk region. Asparagine 61, asparagine 70, and asparagine 86 each carry an N-linked (GlcNAc...) asparagine; by host glycan. The head of neuraminidase stretch occupies residues 91–469 (QCKITGFAPF…DGADINLMPI (379 aa)). Intrachain disulfides connect cysteine 92–cysteine 417, cysteine 124–cysteine 129, cysteine 183–cysteine 230, cysteine 232–cysteine 237, cysteine 278–cysteine 291, cysteine 280–cysteine 289, cysteine 318–cysteine 337, and cysteine 421–cysteine 447. Arginine 118 serves as a coordination point for substrate. Residue asparagine 146 is glycosylated (N-linked (GlcNAc...) asparagine; by host). The active-site Proton donor/acceptor is aspartate 151. Arginine 152 contributes to the substrate binding site. Asparagine 200 and asparagine 234 each carry an N-linked (GlcNAc...) asparagine; by host glycan. Residue 276 to 277 (EE) coordinates substrate. Arginine 292 is a substrate binding site. Ca(2+) is bound by residues aspartate 293, glycine 297, and aspartate 324. A substrate-binding site is contributed by arginine 371. Asparagine 402 carries N-linked (GlcNAc...) asparagine; by host glycosylation. Tyrosine 406 acts as the Nucleophile in catalysis.

Belongs to the glycosyl hydrolase 34 family. As to quaternary structure, homotetramer. Requires Ca(2+) as cofactor. In terms of processing, N-glycosylated.

It localises to the virion membrane. The protein localises to the host apical cell membrane. The catalysed reaction is Hydrolysis of alpha-(2-&gt;3)-, alpha-(2-&gt;6)-, alpha-(2-&gt;8)- glycosidic linkages of terminal sialic acid residues in oligosaccharides, glycoproteins, glycolipids, colominic acid and synthetic substrates.. Its activity is regulated as follows. Inhibited by the neuraminidase inhibitors zanamivir (Relenza) and oseltamivir (Tamiflu). These drugs interfere with the release of progeny virus from infected cells and are effective against all influenza strains. Resistance to neuraminidase inhibitors is quite rare. Functionally, catalyzes the removal of terminal sialic acid residues from viral and cellular glycoconjugates. Cleaves off the terminal sialic acids on the glycosylated HA during virus budding to facilitate virus release. Additionally helps virus spread through the circulation by further removing sialic acids from the cell surface. These cleavages prevent self-aggregation and ensure the efficient spread of the progeny virus from cell to cell. Otherwise, infection would be limited to one round of replication. Described as a receptor-destroying enzyme because it cleaves a terminal sialic acid from the cellular receptors. May facilitate viral invasion of the upper airways by cleaving the sialic acid moieties on the mucin of the airway epithelial cells. Likely to plays a role in the budding process through its association with lipid rafts during intracellular transport. May additionally display a raft-association independent effect on budding. Plays a role in the determination of host range restriction on replication and virulence. Sialidase activity in late endosome/lysosome traffic seems to enhance virus replication. The polypeptide is Neuraminidase (Aves (whales)).